We begin with the raw amino-acid sequence, 396 residues long: Elongation factor Tu 2 (396 aa).

A tr-type G domain is found at 10 to 206 (KPHCNIGTIG…TVDAYIPQPD (197 aa)). Positions 19 to 26 (GHVDHGKT) are G1. 19 to 26 (GHVDHGKT) contributes to the GTP binding site. Thr-26 contacts Mg(2+). The G2 stretch occupies residues 60–64 (GITIN). The segment at 81–84 (DCPG) is G3. GTP contacts are provided by residues 81 to 85 (DCPGH) and 136 to 139 (NKVD). The tract at residues 136–139 (NKVD) is G4. A G5 region spans residues 174 to 176 (SAK).

This sequence belongs to the TRAFAC class translation factor GTPase superfamily. Classic translation factor GTPase family. EF-Tu/EF-1A subfamily. As to quaternary structure, monomer.

Its subcellular location is the cytoplasm. The catalysed reaction is GTP + H2O = GDP + phosphate + H(+). Its function is as follows. GTP hydrolase that promotes the GTP-dependent binding of aminoacyl-tRNA to the A-site of ribosomes during protein biosynthesis. This Caulobacter sp. (strain K31) protein is Elongation factor Tu 2.